The following is a 237-amino-acid chain: 1-(5-phosphoribosyl)-5-[(5-phosphoribosylamino)methylideneamino] imidazole-4-carboxamide isomerase (237 aa).

Aspartate 8 (proton acceptor) is an active-site residue. Residue aspartate 129 is the Proton donor of the active site.

The protein belongs to the HisA/HisF family.

It localises to the cytoplasm. The enzyme catalyses 1-(5-phospho-beta-D-ribosyl)-5-[(5-phospho-beta-D-ribosylamino)methylideneamino]imidazole-4-carboxamide = 5-[(5-phospho-1-deoxy-D-ribulos-1-ylimino)methylamino]-1-(5-phospho-beta-D-ribosyl)imidazole-4-carboxamide. It functions in the pathway amino-acid biosynthesis; L-histidine biosynthesis; L-histidine from 5-phospho-alpha-D-ribose 1-diphosphate: step 4/9. The protein is 1-(5-phosphoribosyl)-5-[(5-phosphoribosylamino)methylideneamino] imidazole-4-carboxamide isomerase of Roseiflexus sp. (strain RS-1).